The following is a 130-amino-acid chain: MSLMDPLANALNHLTNCERVGKKVFYIKPASKLIGRVLKVMQDHGYIGEFEFIEDGRAGIFKVELIGKINKCGAIKPRYAVKKHEFEKFEKRYLPARDFGLLIVSTSQGIMTHYEAKEKGIGGRLISYVY.

It belongs to the universal ribosomal protein uS8 family. In terms of assembly, part of the 30S ribosomal subunit.

Its function is as follows. One of the primary rRNA binding proteins, it binds directly to 16S rRNA central domain where it helps coordinate assembly of the platform of the 30S subunit. In Methanotorris igneus (Methanococcus igneus), this protein is Small ribosomal subunit protein uS8.